The chain runs to 714 residues: Forkhead box protein P2 (714 aa).

Positions 1 to 28 (MMQESATETISNSSMNQNGMSTLSSQLD) are enriched in polar residues. Disordered stretches follow at residues 1-45 (MMQE…SEVS) and 280-338 (DNGI…TGAS). The segment covering 291 to 304 (TTNNSSSTTSSTTS) has biased composition (low complexity). The span at 314–323 (SIVNGQSSVL) shows a compositional bias: polar residues. Residues 325–336 (ARRDSSSHEETG) are compositionally biased toward basic and acidic residues. A C2H2-type zinc finger spans residues 345-370 (GVCKWPGCESICEDFGQFLKHLNNEH). The interval 387 to 408 (VQQLEIQLSKERERLQAMMTHL) is leucine-zipper. Positions 421–425 (PLNLV) are CTBP1-binding. The segment covering 437-458 (TSPQSLPQTPTTPTAPVTPITQ) has biased composition (low complexity). Positions 437–464 (TSPQSLPQTPTTPTAPVTPITQGPSVIT) are disordered. Residues 503–593 (RPPFTYATLI…SQKITGSPTL (91 aa)) constitute a DNA-binding region (fork-head). Disordered regions lie at residues 648 to 667 (LDHIDSNGNSSPGCSPQPHI) and 677 to 714 (VIAEDEDCPMSLVTTANHSPELEDDREIEEEPLSEDLE). Residues 698–714 (LEDDREIEEEPLSEDLE) are compositionally biased toward acidic residues.

As to quaternary structure, forms homodimers and heterodimers with FOXP1 and FOXP4. Dimerization is required for DNA-binding. Interacts with CTBP1. Interacts with FOXP1. Interacts with TBR1. Interacts with ZMYM2. In terms of tissue distribution, highest expression in lung. Lower expression in spleen, skeletal muscle, brain, kidney and small intestine.

The protein resides in the nucleus. Its function is as follows. Transcriptional repressor that may play a role in the specification and differentiation of lung epithelium. May also play a role in developing neural, gastrointestinal and cardiovascular tissues. Can act with CTBP1 to synergistically repress transcription but CTPBP1 is not essential. Plays a role in synapse formation by regulating SRPX2 levels. The sequence is that of Forkhead box protein P2 (Foxp2) from Mus musculus (Mouse).